The chain runs to 428 residues: Diaminopimelate decarboxylase (428 aa).

Position 64 is an N6-(pyridoxal phosphate)lysine (Lys-64). Pyridoxal 5'-phosphate-binding positions include Gly-239 and Glu-281–Arg-284. Positions 284, 319, and 323 each coordinate substrate. Cys-350 serves as the catalytic Proton donor. The substrate site is built by Glu-351 and Tyr-379. Tyr-379 is a binding site for pyridoxal 5'-phosphate.

Belongs to the Orn/Lys/Arg decarboxylase class-II family. LysA subfamily. In terms of assembly, homodimer. The cofactor is pyridoxal 5'-phosphate.

The catalysed reaction is meso-2,6-diaminopimelate + H(+) = L-lysine + CO2. The protein operates within amino-acid biosynthesis; L-lysine biosynthesis via DAP pathway; L-lysine from DL-2,6-diaminopimelate: step 1/1. Functionally, specifically catalyzes the decarboxylation of meso-diaminopimelate (meso-DAP) to L-lysine. The sequence is that of Diaminopimelate decarboxylase from Methanothermobacter thermautotrophicus (strain ATCC 29096 / DSM 1053 / JCM 10044 / NBRC 100330 / Delta H) (Methanobacterium thermoautotrophicum).